Consider the following 401-residue polypeptide: Phosphoglycerate kinase 3, cytosolic (401 aa).

Residues V24, D25, N27, R41, S63, H64, G66, R67, R122, H154, and R155 each contribute to the (2R)-3-phosphoglycerate site. G200 contacts ADP. G200 contacts CDP. Residues K202 and K206 each contribute to the AMP site. K206 contacts ATP. Position 224 (G224) interacts with ADP. CDP is bound at residue G224. The AMP site is built by G225 and G297. ATP is bound by residues G225, G297, and N321. G322 and F327 together coordinate CDP. F327 serves as a coordination point for ADP. E328 is an AMP binding site. The ATP site is built by E328, D359, and S360. D359 is a binding site for Mg(2+).

This sequence belongs to the phosphoglycerate kinase family. As to quaternary structure, monomer. Mg(2+) serves as cofactor. In terms of tissue distribution, expressed in roots, leaves and inflorescence.

Its subcellular location is the cytoplasm. It catalyses the reaction (2R)-3-phosphoglycerate + ATP = (2R)-3-phospho-glyceroyl phosphate + ADP. It participates in carbohydrate degradation; glycolysis; pyruvate from D-glyceraldehyde 3-phosphate: step 2/5. The chain is Phosphoglycerate kinase 3, cytosolic from Arabidopsis thaliana (Mouse-ear cress).